We begin with the raw amino-acid sequence, 215 residues long: Ubiquitin-conjugating enzyme E2 S (215 aa).

Positions 9–155 (DVIKRVVKEL…AKLFTSIHAS (147 aa)) constitute a UBC core domain. Cysteine 93 serves as the catalytic Glycyl thioester intermediate. The disordered stretch occupies residues 159-215 (IDSNNNNENSTTTPTTTTTATTPSTNTASISSPVKKKTETTNSTTTKVQPKKSLKRL). Residues 161-190 (SNNNNENSTTTPTTTTTATTPSTNTASISS) are compositionally biased toward low complexity.

Belongs to the ubiquitin-conjugating enzyme family.

The catalysed reaction is S-ubiquitinyl-[E1 ubiquitin-activating enzyme]-L-cysteine + [E2 ubiquitin-conjugating enzyme]-L-cysteine = [E1 ubiquitin-activating enzyme]-L-cysteine + S-ubiquitinyl-[E2 ubiquitin-conjugating enzyme]-L-cysteine.. The protein operates within protein modification; protein ubiquitination. Functionally, catalyzes the covalent attachment of ubiquitin to other proteins. Acts as an essential factor of the anaphase promoting complex/cyclosome (APC/C), a cell cycle-regulated ubiquitin ligase that controls progression through mitosis. Acts by specifically elongating polyubiquitin chains initiated by the E2 enzyme ubch10 on APC/C substrates, enhancing the degradation of APC/C substrates by the proteasome and promoting mitotic exit. This is Ubiquitin-conjugating enzyme E2 S (ube2s) from Dictyostelium discoideum (Social amoeba).